Reading from the N-terminus, the 306-residue chain is D-aminoacyl-tRNA deacylase (306 aa).

It belongs to the DtdA deacylase family. In terms of assembly, monomer. Zn(2+) is required as a cofactor.

It carries out the reaction a D-aminoacyl-tRNA + H2O = a tRNA + a D-alpha-amino acid + H(+). The catalysed reaction is glycyl-tRNA(Ala) + H2O = tRNA(Ala) + glycine + H(+). Functionally, D-aminoacyl-tRNA deacylase with broad substrate specificity. By recycling D-aminoacyl-tRNA to D-amino acids and free tRNA molecules, this enzyme counteracts the toxicity associated with the formation of D-aminoacyl-tRNA entities in vivo. The sequence is that of D-aminoacyl-tRNA deacylase from Methanosarcina barkeri (strain Fusaro / DSM 804).